Here is a 107-residue protein sequence, read N- to C-terminus: Iron-binding protein IscA (107 aa).

Residues Cys35, Cys99, and Cys101 each contribute to the Fe cation site.

This sequence belongs to the HesB/IscA family. As to quaternary structure, homodimer; may form tetramers and higher multimers. It depends on Fe cation as a cofactor.

Is able to transfer iron-sulfur clusters to apo-ferredoxin. Multiple cycles of [2Fe2S] cluster formation and transfer are observed, suggesting that IscA acts catalytically. Recruits intracellular free iron so as to provide iron for the assembly of transient iron-sulfur cluster in IscU in the presence of IscS, L-cysteine and the thioredoxin reductase system TrxA/TrxB. In Proteus mirabilis (strain HI4320), this protein is Iron-binding protein IscA.